The sequence spans 393 residues: S-adenosylmethionine synthase 2 (393 aa).

E9 is a binding site for Mg(2+). H15 contributes to the ATP binding site. E43 serves as a coordination point for K(+). Residues E56 and Q99 each coordinate L-methionine. ATP-binding positions include 167–169 (DGK), 235–238 (SGRF), D246, 252–253 (RK), A269, K273, and K277. D246 is an L-methionine binding site. K277 serves as a coordination point for L-methionine.

The protein belongs to the AdoMet synthase family. As to quaternary structure, homotetramer. Mn(2+) is required as a cofactor. Mg(2+) serves as cofactor. The cofactor is Co(2+). It depends on K(+) as a cofactor. Mostly expressed in roots. Also present in stems and leaves.

It is found in the cytoplasm. The catalysed reaction is L-methionine + ATP + H2O = S-adenosyl-L-methionine + phosphate + diphosphate. It functions in the pathway amino-acid biosynthesis; S-adenosyl-L-methionine biosynthesis; S-adenosyl-L-methionine from L-methionine: step 1/1. In terms of biological role, catalyzes the formation of S-adenosylmethionine from methionine and ATP. The reaction comprises two steps that are both catalyzed by the same enzyme: formation of S-adenosylmethionine (AdoMet) and triphosphate, and subsequent hydrolysis of the triphosphate. The sequence is that of S-adenosylmethionine synthase 2 (SAM2) from Solanum lycopersicum (Tomato).